A 428-amino-acid chain; its full sequence is Leucine-rich repeat-containing protein 42 (428 aa).

5 LRR repeats span residues Val149–Lys170, Glu174–Leu195, Ser202–Thr222, Asn234–Phe255, and Lys259–Leu280. The interval Lys379 to Gln412 is disordered. A compositionally biased stretch (basic and acidic residues) spans Arg394 to Gln403. A phosphoserine mark is found at Ser406 and Ser407.

This sequence belongs to the LRRC42 family.

This chain is Leucine-rich repeat-containing protein 42 (LRRC42), found in Bos taurus (Bovine).